A 444-amino-acid chain; its full sequence is Probable galactarate/D-glucarate transporter GarP (444 aa).

The Cytoplasmic portion of the chain corresponds to 1 to 11; the sequence is MILDTVDEKKK. A helical transmembrane segment spans residues 12–32; the sequence is GVHTRYLILLIIFIVTAVNYA. Over 33–56 the chain is Periplasmic; it reads DRATLSIAGTEVAKELQLSAVSMG. A helical transmembrane segment spans residues 57-77; the sequence is YIFSAFGWAYLLMQIPGGWLL. The Cytoplasmic segment spans residues 78-89; the sequence is DKFGSKKVYTYS. The next 2 membrane-spanning stretches (helical) occupy residues 90–110 and 111–131; these read LFFW…PLAW and AGIS…PSFP. At 132–157 the chain is on the cytoplasmic side; the sequence is ANARIVAAWFPTKERGTASAIFNSAQ. Helical transmembrane passes span 158 to 178 and 179 to 199; these read YFSL…WGWE and HVFT…IKLI. The Cytoplasmic portion of the chain corresponds to 200-252; that stretch reads HNPTDHPRMSAEELKFISENGAVVDMDHKKPGSAAASGPKLHYIKQLLSNRMM. A helical membrane pass occupies residues 253-273; that stretch reads LGVFFGQYFINTITWFFLTWF. Residues 274–288 lie on the Periplasmic side of the membrane; the sequence is PIYLVQEKGMSILKV. A helical transmembrane segment spans residues 289–309; the sequence is GLVASIPALCGFAGGVLGGVF. Residues 310-319 lie on the Cytoplasmic side of the membrane; sequence SDYLIKRGLS. Residues 320 to 340 form a helical membrane-spanning segment; it reads LTLARKLPIVLGMLLASTIIL. Topologically, residues 341-350 are periplasmic; it reads CNYTNNTTLV. A helical transmembrane segment spans residues 351 to 371; the sequence is VMLMALAFFGKGFGALGWPVI. Over 372–385 the chain is Cytoplasmic; it reads SDTAPKEIVGLCGG. The chain crosses the membrane as a helical span at residues 386–406; sequence VFNVFGNVASIVTPLVIGYLV. Residues 407-413 lie on the Periplasmic side of the membrane; that stretch reads SELHSFN. The helical transmembrane segment at 414–434 threads the bilayer; sequence AALVFVGCSALMAMVCYLFVV. Topologically, residues 435-444 are cytoplasmic; it reads GDIKRMELQK.

Belongs to the major facilitator superfamily. Phthalate permease family.

The protein localises to the cell inner membrane. The enzyme catalyses galactarate(in) + H(+)(in) = galactarate(out) + H(+)(out). It carries out the reaction D-glucarate(in) + H(+)(in) = D-glucarate(out) + H(+)(out). It catalyses the reaction (R)-glycerate(in) + H(+)(in) = (R)-glycerate(out) + H(+)(out). Probably involved in the uptake of galactarate and/or D-glucarate. May also transport D-glycerate. The chain is Probable galactarate/D-glucarate transporter GarP from Escherichia coli (strain K12).